Reading from the N-terminus, the 157-residue chain is Phosphopantetheine adenylyltransferase (157 aa).

It belongs to the eukaryotic CoaD family. Monomer.

It localises to the cytoplasm. The enzyme catalyses (R)-4'-phosphopantetheine + ATP + H(+) = 3'-dephospho-CoA + diphosphate. Its pathway is cofactor biosynthesis; coenzyme A biosynthesis. In terms of biological role, reversibly transfers an adenylyl group from ATP to 4'-phosphopantetheine, yielding dephospho-CoA (dPCoA) and pyrophosphate. The protein is Phosphopantetheine adenylyltransferase of Pyrococcus abyssi (strain GE5 / Orsay).